The following is a 597-amino-acid chain: HECT-type ubiquitin ligase-interacting protein creD (597 aa).

Disordered regions lie at residues 375-398, 439-492, and 576-597; these read EVDPSGYRTPGPGSGPGTPFGTLS, ASEH…MATP, and SRSHSHSDDERRIRLTQARGRA. Residues 452-466 show a composition bias toward polar residues; that stretch reads GPPSGSNTHGSNTHA. A compositionally biased stretch (basic and acidic residues) spans 472 to 483; that stretch reads LSRRASDEDVHD.

This sequence belongs to the arrestin family. Interacts with hulA.

Its function is as follows. Component of the regulatory network controlling carbon source utilization through ubiquitination and deubiquitination involving creA, creB, creC, creD and acrB. May be involved in signaling by recognizing appropriately phosphorylated substrates via its arrestin domains and then recruit a HECT-type ubiquitin ligase such as hulA, leading to ubiquitination of the substrate, providing a link between ubiquitination and phosphorylation in protein regulation and stability. The protein is HECT-type ubiquitin ligase-interacting protein creD (creD) of Emericella nidulans (strain FGSC A4 / ATCC 38163 / CBS 112.46 / NRRL 194 / M139) (Aspergillus nidulans).